A 234-amino-acid polypeptide reads, in one-letter code: Ubiquitin thioesterase OTUB2 (234 aa).

Residues 40–231 (TSIRKTKGDG…TSHYNILYAA (192 aa)) enclose the OTU domain. Asp-48 is an active-site residue. Cys-51 serves as the catalytic Nucleophile. Active-site residues include His-205 and His-224.

This sequence belongs to the peptidase C65 family.

It catalyses the reaction Thiol-dependent hydrolysis of ester, thioester, amide, peptide and isopeptide bonds formed by the C-terminal Gly of ubiquitin (a 76-residue protein attached to proteins as an intracellular targeting signal).. In terms of biological role, hydrolase that can remove conjugated ubiquitin from proteins in vitro and may therefore play an important regulatory role at the level of protein turnover by preventing degradation. Mediates deubiquitination of 'Lys-11'-,'Lys-48'- and 'Lys-63'-linked polyubiquitin chains, with a preference for 'Lys-63'-linked polyubiquitin chains. The protein is Ubiquitin thioesterase OTUB2 (Otub2) of Mus musculus (Mouse).